The primary structure comprises 107 residues: Transmembrane protein 213 (107 aa).

An N-terminal signal peptide occupies residues 1 to 27; that stretch reads MQRLPAATRATLILSLAFASLHSACSA. Residues 28-70 are Extracellular-facing; it reads EASSSNSSSLTAHHPDPGTLEQCLNVDFCPQAARCCRTGVDEY. A helical membrane pass occupies residues 71–91; sequence GWIAAAVGWSLWFLTLILLCV. Topologically, residues 92 to 107 are cytoplasmic; sequence DKLMKLTPDEPKDLQA.

The protein localises to the membrane. The sequence is that of Transmembrane protein 213 (TMEM213) from Homo sapiens (Human).